The primary structure comprises 431 residues: Na(+)-translocating NADH-quinone reductase subunit F (431 aa).

A helical transmembrane segment spans residues 10–30 (IFIASTAFCALGLLLVAIILL). The 2Fe-2S ferredoxin-type domain occupies 41–133 (CKLRINNDDS…DMNLEIEERY (93 aa)). [2Fe-2S] cluster is bound by residues Cys-76, Cys-82, Cys-85, and Cys-117. The FAD-binding FR-type domain maps to 136-286 (ASSWEGTVVS…SGPYGESFMK (151 aa)). A catalytic region spans residues 289–413 (NRPVIFLIGG…ALHNSSILTL (125 aa)).

The protein belongs to the NqrF family. Composed of six subunits; NqrA, NqrB, NqrC, NqrD, NqrE and NqrF. [2Fe-2S] cluster is required as a cofactor. FAD serves as cofactor.

The protein resides in the cell inner membrane. It carries out the reaction a ubiquinone + n Na(+)(in) + NADH + H(+) = a ubiquinol + n Na(+)(out) + NAD(+). NQR complex catalyzes the reduction of ubiquinone-1 to ubiquinol by two successive reactions, coupled with the transport of Na(+) ions from the cytoplasm to the periplasm. The first step is catalyzed by NqrF, which accepts electrons from NADH and reduces ubiquinone-1 to ubisemiquinone by a one-electron transfer pathway. The sequence is that of Na(+)-translocating NADH-quinone reductase subunit F from Chlamydia muridarum (strain MoPn / Nigg).